The following is a 540-amino-acid chain: ATP-dependent RNA helicase DBP3 (540 aa).

Residues 1-35 (MTVEESKKRKLTDDVAIKQNEKKIKKDKKVKDKKD) are compositionally biased toward basic and acidic residues. Residues 1–89 (MTVEESKKRK…TTEQPSKQVK (89 aa)) are disordered. A compositionally biased stretch (basic residues) spans 36 to 52 (KKDKKDKKDKKEKKEKK). Composition is skewed to basic and acidic residues over residues 53–62 (EKKEKNDKKD) and 68–79 (DKKAEQVDKLSE). Residues 130–156 (LAFNQISLDKEVQNEIAKFPKPTPIQA) carry the Q motif motif. In terms of domain architecture, Helicase ATP-binding spans 159 to 332 (WPYLLSGKDV…STFMKEPVKV (174 aa)). ATP is bound at residue 172 to 179 (AETGSGKT). Positions 279–282 (DEAD) match the DEAD box motif. The region spanning 361–510 (KLLDLLKKYQ…PVPEDLIKFG (150 aa)) is the Helicase C-terminal domain.

Belongs to the DEAD box helicase family. DDX5/DBP2 subfamily.

It localises to the nucleus. The protein resides in the nucleolus. It catalyses the reaction ATP + H2O = ADP + phosphate + H(+). Its function is as follows. ATP-dependent RNA helicase required for 60S ribosomal subunit synthesis. Involved in efficient pre-rRNA processing, predominantly at site A3, which is necessary for the normal formation of 25S and 5.8S rRNAs. In Candida glabrata (strain ATCC 2001 / BCRC 20586 / JCM 3761 / NBRC 0622 / NRRL Y-65 / CBS 138) (Yeast), this protein is ATP-dependent RNA helicase DBP3 (DBP3).